The sequence spans 30 residues: Kalata-B17 (30 aa).

Positions 1–30 (GIPCAESCVYIPCTITALLGCKCKDQVCYN) form a cross-link, cyclopeptide (Gly-Asn). Cystine bridges form between Cys4-Cys21, Cys8-Cys23, and Cys13-Cys28.

In terms of processing, this is a cyclic peptide.

Probably participates in a plant defense mechanism. The polypeptide is Kalata-B17 (Oldenlandia affinis).